Consider the following 142-residue polypeptide: Alpha-lactalbumin (142 aa).

Residues 1-19 form the signal peptide; sequence MMSFVSLLLVGILFHATQA. Residues 20–142 enclose the C-type lysozyme domain; the sequence is EQLTKCEVFQ…KLDQWLCEKL (123 aa). Intrachain disulfides connect C25–C139, C47–C130, C80–C96, and C92–C110. N64 and N93 each carry an N-linked (GlcNAc...) asparagine glycan. Ca(2+)-binding residues include K98, D101, D103, D106, and D107.

It belongs to the glycosyl hydrolase 22 family. In terms of assembly, lactose synthase (LS) is a heterodimer of a catalytic component, beta1,4-galactosyltransferase (beta4Gal-T1) and a regulatory component, alpha-lactalbumin (LA). As to expression, mammary gland specific. Secreted in milk.

It localises to the secreted. In terms of biological role, regulatory subunit of lactose synthase, changes the substrate specificity of galactosyltransferase in the mammary gland making glucose a good acceptor substrate for this enzyme. This enables LS to synthesize lactose, the major carbohydrate component of milk. In other tissues, galactosyltransferase transfers galactose onto the N-acetylglucosamine of the oligosaccharide chains in glycoproteins. The polypeptide is Alpha-lactalbumin (LALBA) (Capra hircus (Goat)).